Consider the following 453-residue polypeptide: Chromosomal replication initiator protein DnaA (453 aa).

Residues 1-73 (MELSPQDLWT…ADVVEEILGY (73 aa)) form a domain I, interacts with DnaA modulators region. Residues 73–110 (YSIDIQLTSTQGENIAIVGETQVSAYYPTLSGEHPKPI) form a domain II region. Positions 111–327 (KLNPKYTFSR…GALIRAITYI (217 aa)) are domain III, AAA+ region. Residues glycine 155, glycine 157, lysine 158, and threonine 159 each coordinate ATP. Residues 328–453 (SISGLSMTVE…HLASRTQKTT (126 aa)) form a domain IV, binds dsDNA region.

It belongs to the DnaA family. As to quaternary structure, oligomerizes as a right-handed, spiral filament on DNA at oriC.

The protein resides in the cytoplasm. Functionally, plays an essential role in the initiation and regulation of chromosomal replication. ATP-DnaA binds to the origin of replication (oriC) to initiate formation of the DNA replication initiation complex once per cell cycle. Binds the DnaA box (a 9 base pair repeat at the origin) and separates the double-stranded (ds)DNA. Forms a right-handed helical filament on oriC DNA; dsDNA binds to the exterior of the filament while single-stranded (ss)DNA is stabiized in the filament's interior. The ATP-DnaA-oriC complex binds and stabilizes one strand of the AT-rich DNA unwinding element (DUE), permitting loading of DNA polymerase. After initiation quickly degrades to an ADP-DnaA complex that is not apt for DNA replication. Binds acidic phospholipids. This Gloeothece citriformis (strain PCC 7424) (Cyanothece sp. (strain PCC 7424)) protein is Chromosomal replication initiator protein DnaA.